The following is a 197-amino-acid chain: UPF0637 protein LEUM_0496 (197 aa).

Belongs to the UPF0637 family.

In Leuconostoc mesenteroides subsp. mesenteroides (strain ATCC 8293 / DSM 20343 / BCRC 11652 / CCM 1803 / JCM 6124 / NCDO 523 / NBRC 100496 / NCIMB 8023 / NCTC 12954 / NRRL B-1118 / 37Y), this protein is UPF0637 protein LEUM_0496.